The sequence spans 134 residues: Small ribosomal subunit protein uS8 (134 aa).

Belongs to the universal ribosomal protein uS8 family. In terms of assembly, part of the 30S ribosomal subunit. Contacts proteins S5 and S12.

Its function is as follows. One of the primary rRNA binding proteins, it binds directly to 16S rRNA central domain where it helps coordinate assembly of the platform of the 30S subunit. This Pseudothermotoga lettingae (strain ATCC BAA-301 / DSM 14385 / NBRC 107922 / TMO) (Thermotoga lettingae) protein is Small ribosomal subunit protein uS8.